Reading from the N-terminus, the 129-residue chain is Ig lambda-1 chain V regions MOPC 104E/RPC20/J558/S104 (129 aa).

The N-terminal stretch at 1–19 is a signal peptide; that stretch reads MAWISLILSLLALSSGAIS. Position 20 is a pyrrolidone carboxylic acid (Q20). The region spanning 20–125 is the Ig-like domain; sequence QAVVTQESAL…HWVFGGGTKL (106 aa).

This Mus musculus (Mouse) protein is Ig lambda-1 chain V regions MOPC 104E/RPC20/J558/S104.